We begin with the raw amino-acid sequence, 399 residues long: 4-hydroxyphenylpyruvate dioxygenase (399 aa).

VOC domains are found at residues 23–166 and 197–355; these read GYDH…LIER and RIDH…LFTK. Positions 200, 283, and 366 each coordinate Fe cation.

The protein belongs to the 4HPPD family. The cofactor is Fe cation.

It catalyses the reaction 3-(4-hydroxyphenyl)pyruvate + O2 = homogentisate + CO2. It functions in the pathway amino-acid degradation; L-phenylalanine degradation; acetoacetate and fumarate from L-phenylalanine: step 3/6. The protein is 4-hydroxyphenylpyruvate dioxygenase (TCRP) of Coccidioides posadasii (strain C735) (Valley fever fungus).